Consider the following 249-residue polypeptide: DNA polymerase sliding clamp (249 aa).

Belongs to the PCNA family. Homotrimer. The subunits circularize to form a toroid; DNA passes through its center. Replication factor C (RFC) is required to load the toroid on the DNA.

In terms of biological role, sliding clamp subunit that acts as a moving platform for DNA processing. Responsible for tethering the catalytic subunit of DNA polymerase and other proteins to DNA during high-speed replication. This Thermococcus onnurineus (strain NA1) protein is DNA polymerase sliding clamp.